We begin with the raw amino-acid sequence, 379 residues long: Cytochrome b (379 aa).

4 helical membrane passes run 33 to 53, 77 to 98, 113 to 133, and 178 to 198; these read FGSLLGLCLISQILTGLFLAM, WLIRNLHANGASFFFICLYLHI, WNIGVVLFLLVMMTAFVGYVL, and FFAFHFLFPFVVAGATMLHLL. Positions 83 and 97 each coordinate heme b. Positions 182 and 196 each coordinate heme b. Histidine 201 is an a ubiquinone binding site. 4 consecutive transmembrane segments (helical) span residues 226-246, 288-308, 320-340, and 347-367; these read YKDLLGFIIMLTALTMLALFY, LGGVLALLSSILVLMVVPILH, ASQLLFWILVADMLVLTWIGG, and YIIIGQVASVLYFSLFLVLNP.

Belongs to the cytochrome b family. In terms of assembly, the cytochrome bc1 complex contains 3 respiratory subunits (MT-CYB, CYC1 and UQCRFS1), 2 core proteins (UQCRC1 and UQCRC2) and probably 6 low-molecular weight proteins. Requires heme b as cofactor.

The protein localises to the mitochondrion inner membrane. Its function is as follows. Component of the ubiquinol-cytochrome c reductase complex (complex III or cytochrome b-c1 complex) that is part of the mitochondrial respiratory chain. The b-c1 complex mediates electron transfer from ubiquinol to cytochrome c. Contributes to the generation of a proton gradient across the mitochondrial membrane that is then used for ATP synthesis. This is Cytochrome b (mt-cyb) from Anguilla rostrata (American eel).